The primary structure comprises 150 residues: Sulfur-rich protein, serovars L1/L3 (150 aa).

The tract at residues 1–20 is disordered; sequence MSTVPVVQGAGSSNSAQDIS. 2 helical membrane passes run 43 to 63 and 69 to 89; these read VGLVVMGLLLVMATIFLVSAA and IYLAIPAIVGCVNICVGILSM.

It is found in the membrane. In Chlamydia trachomatis, this protein is Sulfur-rich protein, serovars L1/L3 (srp).